Consider the following 315-residue polypeptide: Aspartate carbamoyltransferase catalytic subunit (315 aa).

Carbamoyl phosphate-binding residues include arginine 55 and threonine 56. Lysine 83 provides a ligand contact to L-aspartate. Carbamoyl phosphate is bound by residues arginine 105, histidine 138, and glutamine 141. L-aspartate is bound by residues arginine 171 and arginine 225. Carbamoyl phosphate is bound by residues glycine 266 and proline 267.

The protein belongs to the aspartate/ornithine carbamoyltransferase superfamily. ATCase family. In terms of assembly, heterododecamer (2C3:3R2) of six catalytic PyrB chains organized as two trimers (C3), and six regulatory PyrI chains organized as three dimers (R2).

It carries out the reaction carbamoyl phosphate + L-aspartate = N-carbamoyl-L-aspartate + phosphate + H(+). It participates in pyrimidine metabolism; UMP biosynthesis via de novo pathway; (S)-dihydroorotate from bicarbonate: step 2/3. Functionally, catalyzes the condensation of carbamoyl phosphate and aspartate to form carbamoyl aspartate and inorganic phosphate, the committed step in the de novo pyrimidine nucleotide biosynthesis pathway. The sequence is that of Aspartate carbamoyltransferase catalytic subunit from Mycolicibacterium gilvum (strain PYR-GCK) (Mycobacterium gilvum (strain PYR-GCK)).